A 145-amino-acid chain; its full sequence is D-aminoacyl-tRNA deacylase (145 aa).

The Gly-cisPro motif, important for rejection of L-amino acids signature appears at 137–138 (GP).

This sequence belongs to the DTD family. In terms of assembly, homodimer.

It is found in the cytoplasm. The enzyme catalyses glycyl-tRNA(Ala) + H2O = tRNA(Ala) + glycine + H(+). It catalyses the reaction a D-aminoacyl-tRNA + H2O = a tRNA + a D-alpha-amino acid + H(+). In terms of biological role, an aminoacyl-tRNA editing enzyme that deacylates mischarged D-aminoacyl-tRNAs. Also deacylates mischarged glycyl-tRNA(Ala), protecting cells against glycine mischarging by AlaRS. Acts via tRNA-based rather than protein-based catalysis; rejects L-amino acids rather than detecting D-amino acids in the active site. By recycling D-aminoacyl-tRNA to D-amino acids and free tRNA molecules, this enzyme counteracts the toxicity associated with the formation of D-aminoacyl-tRNA entities in vivo and helps enforce protein L-homochirality. This chain is D-aminoacyl-tRNA deacylase, found in Pseudomonas fluorescens (strain Pf0-1).